A 517-amino-acid polypeptide reads, in one-letter code: Xylosidase/arabinosidase (517 aa).

Asp-15 serves as the catalytic Proton acceptor. Glu-185 serves as the catalytic Proton donor.

This sequence belongs to the glycosyl hydrolase 43 family.

It carries out the reaction Hydrolysis of (1-&gt;4)-beta-D-xylans, to remove successive D-xylose residues from the non-reducing termini.. It catalyses the reaction Hydrolysis of terminal non-reducing alpha-L-arabinofuranoside residues in alpha-L-arabinosides.. Has a 1.6-fold higher activity as an arabinosidase than as a beta-xylosidase when tested on the substrates nitrophenyl-beta-D-xylopyranoside and P-nitrophenyl-alpha-L-arabinofuranoside. The protein is Xylosidase/arabinosidase (xylB) of Butyrivibrio fibrisolvens.